We begin with the raw amino-acid sequence, 247 residues long: Ribosomal RNA processing protein 36 homolog (247 aa).

4 disordered regions span residues 1–29 (MDNQLSDSSDDESPTDDCSDEGEVEHLKD), 62–89 (RTQGIPDLETKKKKNKGPQELSSKQRVP), 136–188 (SVEK…RELV), and 218–247 (GKLQKYLTKRRKKTASKDRRHVPERRQVDQ). The span at 8-23 (SSDDESPTDDCSDEGE) shows a compositional bias: acidic residues. Basic and acidic residues-rich tracts occupy residues 136–153 (SVEKELKKTKNAEKRKNL) and 164–174 (ERSRKSAEAKR). The segment covering 218–240 (GKLQKYLTKRRKKTASKDRRHVP) has biased composition (basic residues).

Belongs to the RRP36 family.

The protein localises to the nucleus. It is found in the nucleolus. Functionally, involved in the early processing steps of the pre-rRNA in the maturation pathway leading to the 18S rRNA. The chain is Ribosomal RNA processing protein 36 homolog from Nematostella vectensis (Starlet sea anemone).